We begin with the raw amino-acid sequence, 474 residues long: tRNA-2-methylthio-N(6)-dimethylallyladenosine synthase (474 aa).

The MTTase N-terminal domain occupies 3–120 (KKLHIKTWGC…LPEMINHVQG (118 aa)). Residues cysteine 12, cysteine 49, cysteine 83, cysteine 157, cysteine 161, and cysteine 164 each coordinate [4Fe-4S] cluster. Residues 143-375 (RAEGPTAFVS…QQRISQQAME (233 aa)) form the Radical SAM core domain. The 64-residue stretch at 378 to 441 (RKMVGTVQRV…ASSLRGILLR (64 aa)) folds into the TRAM domain.

This sequence belongs to the methylthiotransferase family. MiaB subfamily. As to quaternary structure, monomer. [4Fe-4S] cluster is required as a cofactor.

Its subcellular location is the cytoplasm. The catalysed reaction is N(6)-dimethylallyladenosine(37) in tRNA + (sulfur carrier)-SH + AH2 + 2 S-adenosyl-L-methionine = 2-methylsulfanyl-N(6)-dimethylallyladenosine(37) in tRNA + (sulfur carrier)-H + 5'-deoxyadenosine + L-methionine + A + S-adenosyl-L-homocysteine + 2 H(+). Its function is as follows. Catalyzes the methylthiolation of N6-(dimethylallyl)adenosine (i(6)A), leading to the formation of 2-methylthio-N6-(dimethylallyl)adenosine (ms(2)i(6)A) at position 37 in tRNAs that read codons beginning with uridine. In Yersinia pseudotuberculosis serotype O:1b (strain IP 31758), this protein is tRNA-2-methylthio-N(6)-dimethylallyladenosine synthase.